Consider the following 101-residue polypeptide: Threonine-rich inner membrane protein GfcA (101 aa).

A signal peptide spans 1 to 21; the sequence is MKHKLSAILMAFMLTTPAAFA. Residues 22–59 are Cytoplasmic-facing; that stretch reads APEATNGTEATTGTTGTTTTTTGATTTATTTGGVAAGA. The tract at residues 24–45 is disordered; that stretch reads EATNGTEATTGTTGTTTTTTGA. The helical transmembrane segment at 60 to 80 threads the bilayer; the sequence is VGTATVVGVATAVGVATLAVV. The Periplasmic portion of the chain corresponds to 81–101; it reads AANDSGDGGSHNTSTTTSTTR. The disordered stretch occupies residues 82 to 101; sequence ANDSGDGGSHNTSTTTSTTR.

Its subcellular location is the cell inner membrane. In Escherichia coli (strain K12), this protein is Threonine-rich inner membrane protein GfcA (gfcA).